The chain runs to 171 residues: Shikimate kinase (171 aa).

Position 14-19 (14-19 (GAGKST)) interacts with ATP. Residue Ser18 coordinates Mg(2+). Substrate contacts are provided by Asp36, Arg60, and Gly82. Arg120 contacts ATP. Substrate is bound at residue Arg139. Gln156 is an ATP binding site.

It belongs to the shikimate kinase family. Monomer. Mg(2+) serves as cofactor.

The protein localises to the cytoplasm. It catalyses the reaction shikimate + ATP = 3-phosphoshikimate + ADP + H(+). It functions in the pathway metabolic intermediate biosynthesis; chorismate biosynthesis; chorismate from D-erythrose 4-phosphate and phosphoenolpyruvate: step 5/7. Catalyzes the specific phosphorylation of the 3-hydroxyl group of shikimic acid using ATP as a cosubstrate. This Shewanella frigidimarina (strain NCIMB 400) protein is Shikimate kinase.